The following is a 621-amino-acid chain: Chaperone protein HscA homolog (621 aa).

The protein belongs to the heat shock protein 70 family.

Its function is as follows. Chaperone involved in the maturation of iron-sulfur cluster-containing proteins. Has a low intrinsic ATPase activity which is markedly stimulated by HscB. The polypeptide is Chaperone protein HscA homolog (Cupriavidus taiwanensis (strain DSM 17343 / BCRC 17206 / CCUG 44338 / CIP 107171 / LMG 19424 / R1) (Ralstonia taiwanensis (strain LMG 19424))).